Reading from the N-terminus, the 653-residue chain is Sodium-dependent phosphate transporter 2 (653 aa).

The Extracellular portion of the chain corresponds to 1 to 5 (MVLDE). A helical transmembrane segment spans residues 6–26 (YMWMVIVGFIIAFVLAFSVGA). Residues 27-46 (NDVANSFGTAVGSGVVTLRQ) lie on the Cytoplasmic side of the membrane. The chain crosses the membrane as a helical span at residues 47–67 (ACILASIFETIGSVLLGAKVG). Residues 68–86 (ETIRKGIIDVNLYNNTVDL) lie on the Extracellular side of the membrane. N-linked (GlcNAc...) asparagine glycosylation is present at Asn81. A helical membrane pass occupies residues 87-107 (LMAGEVSAMVGSAVWQLIASF). At 108-109 (LK) the chain is on the cytoplasmic side. Residues 110–130 (LPVSGTHCIVGATIGFSLVAV) form a helical membrane-spanning segment. Over 131–142 (GAHSVQWMQLVK) the chain is Extracellular. A helical transmembrane segment spans residues 143–163 (IVASWFISPLLSGLMSGALFL). Residues 164-187 (MIKFFILNKEDPVPNGLKALPVFY) are Cytoplasmic-facing. A helical membrane pass occupies residues 188–208 (AATIGINVFSILFTGAPLLGL). Over 209-217 (QTFPVWATA) the chain is Extracellular. Residues 218–238 (LLSVGIAIVFALVVWFFVCPW) traverse the membrane as a helical segment. Over 239–483 (MKKKIASRLK…EDKEEKDKSQ (245 aa)) the chain is Cytoplasmic. Positions 275–310 (LPGAKGNDESVLPLTSSSPDAAVSSESVSNGNTRVP) are disordered. Positions 290 to 303 (SSSPDAAVSSESVS) are enriched in low complexity. The chain crosses the membrane as a helical span at residues 484 to 504 (VHLLFHFLQILTACFGSFAHG). The Extracellular segment spans residues 505 to 532 (GNDVSNAIGPLVALWLIYQQGGVMQEAS). The chain crosses the membrane as a helical span at residues 533 to 553 (TPVWLLLYGGVGICAGLWVWG). Residues 554 to 572 (RRVIQTMGKDLTPITPSSG) are Cytoplasmic-facing. A helical membrane pass occupies residues 573 to 587 (FTIELASAFTVVVAS). The Extracellular portion of the chain corresponds to 588 to 594 (NIGLPIS). A helical transmembrane segment spans residues 595–610 (TTHCKVGSVVAVGWIR). Residues 611 to 622 (SRKAVDWRLFRN) lie on the Cytoplasmic side of the membrane. Residues 623 to 643 (IFLAWFVTVPVAGLFSAGVMA) form a helical membrane-spanning segment. Residues 644–653 (ILQYGILPYV) lie on the Extracellular side of the membrane.

Belongs to the inorganic phosphate transporter (PiT) (TC 2.A.20) family. Homodimer.

The protein resides in the cell membrane. It is found in the apical cell membrane. The enzyme catalyses 2 Na(+)(out) + phosphate(out) = 2 Na(+)(in) + phosphate(in). Its function is as follows. Sodium-phosphate symporter which preferentially transports the monovalent form of phosphate with a stoichiometry of two sodium ions per phosphate ion. This chain is Sodium-dependent phosphate transporter 2 (slc20a2), found in Xenopus laevis (African clawed frog).